A 486-amino-acid polypeptide reads, in one-letter code: Glutamyl-tRNA(Gln) amidotransferase subunit A (486 aa).

Catalysis depends on charge relay system residues Lys76 and Ser151. The active-site Acyl-ester intermediate is Ser175.

This sequence belongs to the amidase family. GatA subfamily. Heterotrimer of A, B and C subunits.

The catalysed reaction is L-glutamyl-tRNA(Gln) + L-glutamine + ATP + H2O = L-glutaminyl-tRNA(Gln) + L-glutamate + ADP + phosphate + H(+). Allows the formation of correctly charged Gln-tRNA(Gln) through the transamidation of misacylated Glu-tRNA(Gln) in organisms which lack glutaminyl-tRNA synthetase. The reaction takes place in the presence of glutamine and ATP through an activated gamma-phospho-Glu-tRNA(Gln). In Nitrosomonas eutropha (strain DSM 101675 / C91 / Nm57), this protein is Glutamyl-tRNA(Gln) amidotransferase subunit A.